We begin with the raw amino-acid sequence, 383 residues long: uncharacterized protein (383 aa).

A run of 2 helical transmembrane segments spans residues 49–69 (VDLLAAVQASVEPAALIGCVA) and 347–367 (LLGGIPLAGFFAAGEIGPVAG).

To M.tuberculosis Rv0874c.

It localises to the cell membrane. This is an uncharacterized protein from Mycobacterium tuberculosis (strain CDC 1551 / Oshkosh).